A 534-amino-acid polypeptide reads, in one-letter code: ATP-dependent rRNA helicase RRP3 (534 aa).

Residues 67–107 (KQQALQKQQKQQKQQEQENANHNQTESSLSSSSSTTSSSIT) form a disordered region. Low complexity-rich tracts occupy residues 68–80 (QQALQKQQKQQKQ) and 91–107 (TESSLSSSSSTTSSSIT). The Q motif motif lies at 118–146 (KTFKELNLVPDLLESIESMKFTKPTPIQS). Residues 149 to 320 (IPHALEGKDI…RASLHNPVRV (172 aa)) enclose the Helicase ATP-binding domain. 162–169 (AQTGSGKT) contacts ATP. Residues 268-271 (DEAD) carry the DEAD box motif. Positions 347 to 492 (ILIHLLNEFM…EDKPPKEVLD (146 aa)) constitute a Helicase C-terminal domain. 2 stretches are compositionally biased toward basic and acidic residues: residues 505-517 (AIRQTKEIHDKRN) and 525-534 (NRDDADREER). The segment at 505–534 (AIRQTKEIHDKRNGGGGRRRNRDDADREER) is disordered.

The protein belongs to the DEAD box helicase family. DDX47/RRP3 subfamily. Interacts with the SSU processome.

The protein localises to the nucleus. The enzyme catalyses ATP + H2O = ADP + phosphate + H(+). Its function is as follows. ATP-dependent rRNA helicase required for pre-ribosomal RNA processing. Involved in the maturation of the 35S-pre-rRNA and to its cleavage to mature 18S rRNA. The protein is ATP-dependent rRNA helicase RRP3 of Candida albicans (strain SC5314 / ATCC MYA-2876) (Yeast).